A 123-amino-acid polypeptide reads, in one-letter code: Large ribosomal subunit protein bL12 (123 aa).

Belongs to the bacterial ribosomal protein bL12 family. In terms of assembly, homodimer. Part of the ribosomal stalk of the 50S ribosomal subunit. Forms a multimeric L10(L12)X complex, where L10 forms an elongated spine to which 2 to 4 L12 dimers bind in a sequential fashion. Binds GTP-bound translation factors.

Its function is as follows. Forms part of the ribosomal stalk which helps the ribosome interact with GTP-bound translation factors. Is thus essential for accurate translation. The polypeptide is Large ribosomal subunit protein bL12 (Bartonella henselae (strain ATCC 49882 / DSM 28221 / CCUG 30454 / Houston 1) (Rochalimaea henselae)).